The following is a 180-amino-acid chain: F17 fimbrial protein (180 aa).

Positions 1–21 (MQKIQFILGILAAASSSATLA) are cleaved as a signal peptide. Cys-37 and Cys-77 form a disulfide bridge.

Belongs to the fimbrial protein family.

It is found in the fimbrium. Fimbriae (also called pili), polar filaments radiating from the surface of the bacterium to a length of 0.5-1.5 micrometers and numbering 100-300 per cell, enable bacteria to colonize the epithelium of specific host organs. In Escherichia coli, this protein is F17 fimbrial protein (F17a-A).